Reading from the N-terminus, the 197-residue chain is Elongation factor Ts (197 aa).

The interval 81–84 (TDFV) is involved in Mg(2+) ion dislocation from EF-Tu.

The protein belongs to the EF-Ts family.

It is found in the cytoplasm. Functionally, associates with the EF-Tu.GDP complex and induces the exchange of GDP to GTP. It remains bound to the aminoacyl-tRNA.EF-Tu.GTP complex up to the GTP hydrolysis stage on the ribosome. The polypeptide is Elongation factor Ts (Thermotoga neapolitana (strain ATCC 49049 / DSM 4359 / NBRC 107923 / NS-E)).